Here is a 243-residue protein sequence, read N- to C-terminus: Orotidine 5'-phosphate decarboxylase (243 aa).

Residues aspartate 19, lysine 41, 69–78, threonine 124, arginine 185, glutamine 194, glycine 214, and arginine 215 each bind substrate; that span reads DLKFFDIPAT. Lysine 71 serves as the catalytic Proton donor.

This sequence belongs to the OMP decarboxylase family. Type 1 subfamily. As to quaternary structure, homodimer.

The enzyme catalyses orotidine 5'-phosphate + H(+) = UMP + CO2. The protein operates within pyrimidine metabolism; UMP biosynthesis via de novo pathway; UMP from orotate: step 2/2. Functionally, catalyzes the decarboxylation of orotidine 5'-monophosphate (OMP) to uridine 5'-monophosphate (UMP). The protein is Orotidine 5'-phosphate decarboxylase of Xanthomonas campestris pv. campestris (strain B100).